Consider the following 246-residue polypeptide: Acetoacetate decarboxylase (246 aa).

The active-site Schiff-base intermediate with acetoacetate is the K115.

The protein belongs to the ADC family.

It catalyses the reaction acetoacetate + H(+) = acetone + CO2. Catalyzes the conversion of acetoacetate to acetone and carbon dioxide. This Clostridium beijerinckii (strain ATCC 51743 / NCIMB 8052) (Clostridium acetobutylicum) protein is Acetoacetate decarboxylase.